A 222-amino-acid chain; its full sequence is PKHD-type hydroxylase cce_3668 (222 aa).

Positions 78 to 175 (HIHSLRFSRY…RLVVVGWVHS (98 aa)) constitute a Fe2OG dioxygenase domain. 3 residues coordinate Fe cation: His96, Asp98, and His156. Residue Arg166 participates in 2-oxoglutarate binding.

Fe(2+) serves as cofactor. Requires L-ascorbate as cofactor.

In Crocosphaera subtropica (strain ATCC 51142 / BH68) (Cyanothece sp. (strain ATCC 51142)), this protein is PKHD-type hydroxylase cce_3668.